The sequence spans 148 residues: Large ribosomal subunit protein uL15 (148 aa).

The tract at residues methionine 1–glutamate 51 is disordered. Residues arginine 21 to serine 31 show a composition bias toward gly residues.

The protein belongs to the universal ribosomal protein uL15 family. In terms of assembly, part of the 50S ribosomal subunit.

Its function is as follows. Binds to the 23S rRNA. In Porphyromonas gingivalis (strain ATCC 33277 / DSM 20709 / CIP 103683 / JCM 12257 / NCTC 11834 / 2561), this protein is Large ribosomal subunit protein uL15.